Here is a 363-residue protein sequence, read N- to C-terminus: MKQILFAGVIGLFLTLVGTPLLIKLLARKGYGQYIRDDGPREHASKRGTPTMGGIAFILATVAAYFLAKGITSYLDPDIDAGPTFSGLLVLGLMVGMGLVGFLDDYIKIVKRRSLGLRARAKMIGQLTVGIAFAVLSLQFADNRGNTPASTKLSFITDFGWTIGPVLFVVWALFMILAMSNGVNLTDGLDGLATGASVLVFGAYTFIGVWQFQESCANALTLTNPGACYEVRDPLDLAVVASALMGSCLGFLWWNTSPAKIFMGDTGSLALGGVLAGLAICSRTELLMAILGGLFVLITMSVVIQVGSFRLTGKRVFRMAPLQHHFELKGWSEVLVVVRFWIIQGICVIVGLGLFYAGWATDK.

10 helical membrane passes run 3–23 (QILFAGVIGLFLTLVGTPLLI), 48–68 (GTPTMGGIAFILATVAAYFLA), 83–103 (PTFSGLLVLGLMVGMGLVGFL), 121–141 (AKMIGQLTVGIAFAVLSLQFA), 159–179 (FGWTIGPVLFVVWALFMILAM), 192–212 (LATGASVLVFGAYTFIGVWQF), 234–254 (PLDLAVVASALMGSCLGFLWW), 261–281 (IFMGDTGSLALGGVLAGLAIC), 286–306 (LLMAILGGLFVLITMSVVIQV), and 340–360 (FWIIQGICVIVGLGLFYAGWA).

It belongs to the glycosyltransferase 4 family. MraY subfamily. Requires Mg(2+) as cofactor.

Its subcellular location is the cell membrane. The enzyme catalyses UDP-N-acetyl-alpha-D-muramoyl-L-alanyl-gamma-D-glutamyl-meso-2,6-diaminopimeloyl-D-alanyl-D-alanine + di-trans,octa-cis-undecaprenyl phosphate = di-trans,octa-cis-undecaprenyl diphospho-N-acetyl-alpha-D-muramoyl-L-alanyl-D-glutamyl-meso-2,6-diaminopimeloyl-D-alanyl-D-alanine + UMP. The protein operates within cell wall biogenesis; peptidoglycan biosynthesis. Functionally, catalyzes the initial step of the lipid cycle reactions in the biosynthesis of the cell wall peptidoglycan: transfers peptidoglycan precursor phospho-MurNAc-pentapeptide from UDP-MurNAc-pentapeptide onto the lipid carrier undecaprenyl phosphate, yielding undecaprenyl-pyrophosphoryl-MurNAc-pentapeptide, known as lipid I. The protein is Phospho-N-acetylmuramoyl-pentapeptide-transferase of Streptomyces coelicolor (strain ATCC BAA-471 / A3(2) / M145).